We begin with the raw amino-acid sequence, 131 residues long: Small ribosomal subunit protein uS8 (131 aa).

It belongs to the universal ribosomal protein uS8 family. As to quaternary structure, part of the 30S ribosomal subunit. Contacts proteins S5 and S12.

In terms of biological role, one of the primary rRNA binding proteins, it binds directly to 16S rRNA central domain where it helps coordinate assembly of the platform of the 30S subunit. The polypeptide is Small ribosomal subunit protein uS8 (Cupriavidus metallidurans (strain ATCC 43123 / DSM 2839 / NBRC 102507 / CH34) (Ralstonia metallidurans)).